A 156-amino-acid polypeptide reads, in one-letter code: RING finger protein 224 (156 aa).

An RING-type zinc finger spans residues cysteine 24–arginine 71.

The chain is RING finger protein 224 (RNF224) from Homo sapiens (Human).